The primary structure comprises 95 residues: Co-chaperonin GroES (95 aa).

Belongs to the GroES chaperonin family. In terms of assembly, heptamer of 7 subunits arranged in a ring. Interacts with the chaperonin GroEL.

Its subcellular location is the cytoplasm. Together with the chaperonin GroEL, plays an essential role in assisting protein folding. The GroEL-GroES system forms a nano-cage that allows encapsulation of the non-native substrate proteins and provides a physical environment optimized to promote and accelerate protein folding. GroES binds to the apical surface of the GroEL ring, thereby capping the opening of the GroEL channel. The protein is Co-chaperonin GroES of Bordetella bronchiseptica (strain ATCC BAA-588 / NCTC 13252 / RB50) (Alcaligenes bronchisepticus).